The sequence spans 503 residues: E3 ubiquitin-protein ligase ariadne-1 (503 aa).

A compositionally biased stretch (acidic residues) spans 1–11 (MDSDNDNDFCD). The segment at 1 to 40 (MDSDNDNDFCDNVDSGNVSSGDDGDDDFGMEVDLPSSADR) is disordered. Low complexity predominate over residues 12-21 (NVDSGNVSSG). Residues 129 to 340 (QCEECEICFS…SSWYNCNRYD (212 aa)) are TRIAD supradomain. Zn(2+)-binding residues include Cys133, Cys136, Cys150, His152, Cys155, Cys158, Cys178, Cys183, Cys223, Cys228, Cys244, Cys246, Cys251, Cys254, His259, Cys264, Cys291, and Cys294. An RING-type 1 zinc finger spans residues 133–183 (CEICFSQLPPDSMAGLECGHRFCMPCWHEYLSTKIVAEGLGQTISCAAHGC). An important for interaction with Ubc10 region spans residues 133–201 (CEICFSQLPP…VANLVTDARV (69 aa)). The IBR-type zinc finger occupies 203–264 (VKYQQLITNS…GENWHDPVKC (62 aa)). An RING-type 2; atypical zinc finger spans residues 291-322 (CPRCSVTIEKDGGCNHMVCKNQNCKNEFCWVC). Cys304 is a catalytic residue. Cys309, Cys314, Cys319, Cys322, His329, and Cys336 together coordinate Zn(2+). Residues 341 to 361 (EDEAKTARDAQEKLRSSLARY) adopt a coiled-coil conformation.

Belongs to the RBR family. Ariadne subfamily. Can form homodimers. Interacts (via RING-type 1 zinc finger) with Ubc10. Interacts with the LINC complex member koi. Interacts with park. Interacts with ari-2. Specifically interacts with isoform ECR-A of EcR. Autophosphorylated. In terms of tissue distribution, widely expressed, with prominent levels in the nervous system and female gonads.

It is found in the cytoplasm. Its subcellular location is the nucleus. It carries out the reaction [E2 ubiquitin-conjugating enzyme]-S-ubiquitinyl-L-cysteine + [acceptor protein]-L-lysine = [E2 ubiquitin-conjugating enzyme]-L-cysteine + [acceptor protein]-N(6)-ubiquitinyl-L-lysine.. Its function is as follows. Atypical E3 ubiquitin-protein ligase, which catalyzes ubiquitination of target proteins together with ubiquitin-conjugating enzyme E2 Ubc10. Controls the subcellular localization and morphology of muscle nuclei (myonuclei) by regulating the protein levels and distribution of the LINC (LInker of Nucleoskeleton and Cytoskeleton) complex. Functions by mediating the monoubiquitination of the LINC complex subunit koi leading to its subsequent proteasomal degradation. Appears to function, at least partially redundantly, with the RBR E3 ligase family member park in nuclear localization and morphology. Likely to function in metamorphosis by regulating the proteins levels of EcR isoform A (ECR-A) and its heterodimeric partner usp, via the ubiquitination and subsequent degradation of ECR-A. The polypeptide is E3 ubiquitin-protein ligase ariadne-1 (Drosophila melanogaster (Fruit fly)).